The following is a 154-amino-acid chain: MRVLLQRVSEASVTVDGTLVSSIGQGVLLLVGVRHGDDRATAEWLAHKVAHLRIFEDEAGKMNRSLLDVGGSALVVSQFTLYADVRKGRRPSFIEAAPPNEARPLVDTFAETLRALGVPVETGVFGAHMDVALVNDGPVTIWLDSAELRGGSLD.

The short motif at 137 to 138 (GP) is the Gly-cisPro motif, important for rejection of L-amino acids element.

The protein belongs to the DTD family. Homodimer.

The protein localises to the cytoplasm. It catalyses the reaction glycyl-tRNA(Ala) + H2O = tRNA(Ala) + glycine + H(+). The catalysed reaction is a D-aminoacyl-tRNA + H2O = a tRNA + a D-alpha-amino acid + H(+). An aminoacyl-tRNA editing enzyme that deacylates mischarged D-aminoacyl-tRNAs. Also deacylates mischarged glycyl-tRNA(Ala), protecting cells against glycine mischarging by AlaRS. Acts via tRNA-based rather than protein-based catalysis; rejects L-amino acids rather than detecting D-amino acids in the active site. By recycling D-aminoacyl-tRNA to D-amino acids and free tRNA molecules, this enzyme counteracts the toxicity associated with the formation of D-aminoacyl-tRNA entities in vivo and helps enforce protein L-homochirality. The polypeptide is D-aminoacyl-tRNA deacylase (Thermomicrobium roseum (strain ATCC 27502 / DSM 5159 / P-2)).